The chain runs to 295 residues: MPVNSPAPWQTIAQQISQTTGQPFRIQERRSVSGGCINQGYCLVDGEQKYFVKLNQAQQWQMFQAEALGLEAMAATQTIRVPRPICHGSSAGHSYLVLEWLEFGRGNHDSWYRMGQNLAALHQAGGSAQFGWQTDNTIGATPQPNPWTDSWADFFAEHRLGYQLALARRRAGNFPDPAVVVPKVKQLLGDRQPTPALVHGDLWSGNGAILTTGEPVILDPATYYGDGEVDLAMTELFGGFPAAFYQGYHSISPAEPGYQQRKILYNLYHILNHFNLFGGGYQQQAQQMLKQCLRI.

99–101 lines the ATP pocket; that stretch reads EWL. The active-site Proton acceptor is the Asp201.

Belongs to the fructosamine kinase family.

Functionally, ketoamine kinase that phosphorylates ketoamines on the third carbon of the sugar moiety to generate ketoamine 3-phosphate. This chain is Probable ketoamine kinase slr1563, found in Synechocystis sp. (strain ATCC 27184 / PCC 6803 / Kazusa).